A 169-amino-acid polypeptide reads, in one-letter code: Der GTPase-activating protein YihI (169 aa).

Disordered stretches follow at residues 1–75 (MKPS…IPLG) and 144–169 (GLSY…LRGN). Basic residues predominate over residues 10-19 (SKGHAKARRK). The span at 20–30 (TREELDQEARD) shows a compositional bias: basic and acidic residues. The segment covering 31 to 40 (RKRQKKRRGH) has biased composition (basic residues). Residues 49-58 (GNTTSGSKGQ) show a composition bias toward polar residues. Positions 147–159 (YDDDEEEEEDEKQ) are enriched in acidic residues. Residues 160 to 169 (EDMMRLLRGN) show a composition bias toward basic and acidic residues.

The protein belongs to the YihI family. As to quaternary structure, interacts with Der.

Its function is as follows. A GTPase-activating protein (GAP) that modifies Der/EngA GTPase function. May play a role in ribosome biogenesis. The sequence is that of Der GTPase-activating protein YihI from Escherichia coli (strain 55989 / EAEC).